The sequence spans 171 residues: Large ribosomal subunit protein uL10 (171 aa).

This sequence belongs to the universal ribosomal protein uL10 family. As to quaternary structure, part of the ribosomal stalk of the 50S ribosomal subunit. The N-terminus interacts with L11 and the large rRNA to form the base of the stalk. The C-terminus forms an elongated spine to which L12 dimers bind in a sequential fashion forming a multimeric L10(L12)X complex.

Forms part of the ribosomal stalk, playing a central role in the interaction of the ribosome with GTP-bound translation factors. This is Large ribosomal subunit protein uL10 from Corynebacterium glutamicum (strain ATCC 13032 / DSM 20300 / JCM 1318 / BCRC 11384 / CCUG 27702 / LMG 3730 / NBRC 12168 / NCIMB 10025 / NRRL B-2784 / 534).